A 255-amino-acid polypeptide reads, in one-letter code: Acetylglutamate kinase (255 aa).

Residues 40-41 (GG), Arg-62, and Asn-157 each bind substrate.

Belongs to the acetylglutamate kinase family. ArgB subfamily.

The protein localises to the cytoplasm. It catalyses the reaction N-acetyl-L-glutamate + ATP = N-acetyl-L-glutamyl 5-phosphate + ADP. It participates in amino-acid biosynthesis; L-arginine biosynthesis; N(2)-acetyl-L-ornithine from L-glutamate: step 2/4. Its function is as follows. Catalyzes the ATP-dependent phosphorylation of N-acetyl-L-glutamate. This chain is Acetylglutamate kinase, found in Parabacteroides distasonis (strain ATCC 8503 / DSM 20701 / CIP 104284 / JCM 5825 / NCTC 11152).